The chain runs to 467 residues: MKVLFAITEAEPFVKTGGLGEVGRYLPLALQEQGVEIRVILPQYSSIPRNYLQKMKTIKEFTVPLAWRNQYCGLKELKYEGIHYYFLDNEYYFRRSRCYGDGDEGEQYAYFSRAVLESVRYLPEFKPDIIHCHDWHTALVPLFLKAFYAQDTLYYNIKTLFTIHNLKYQGIFPREVREDVLGLSGELSSSAQLEFYGGVNFMKAGIMHSDQVTTVSPTYAREIQHPYFGEGLHGVIQGRKDSLLGILNGVPRPWPSPTLADKRANRMKLQEQLNFTNNEEIPILSMISRLVEQKGLDLLLHVLDEILALDIRLVVLGTGDAHYEERLQRFAEGYPGKLRVILGYQEELAHRIYAGADIFLMPSRFEPCGIAQMIAMSYGTIPIVRETGGLKDTVRPYSPISGEGNGFTFTDYNAHELLYAIQKAVEMFRNQKDTWQKLQENALSSDFSWNRSAARYRDVYESLYYSS.

Lysine 15 contacts ADP-alpha-D-glucose.

It belongs to the glycosyltransferase 1 family. Bacterial/plant glycogen synthase subfamily.

The enzyme catalyses [(1-&gt;4)-alpha-D-glucosyl](n) + ADP-alpha-D-glucose = [(1-&gt;4)-alpha-D-glucosyl](n+1) + ADP + H(+). The protein operates within glycan biosynthesis; glycogen biosynthesis. Functionally, synthesizes alpha-1,4-glucan chains using ADP-glucose. This chain is Glycogen synthase, found in Desulfitobacterium hafniense (strain DSM 10664 / DCB-2).